Here is a 613-residue protein sequence, read N- to C-terminus: Xaa-Pro aminopeptidase ApepP (613 aa).

Residues arginine 77 and histidine 388 each coordinate substrate. The Mn(2+) site is built by aspartate 408, aspartate 419, and histidine 482. Positions 482, 491, and 517 each coordinate substrate. Mn(2+) contacts are provided by glutamate 517 and glutamate 531.

The protein belongs to the peptidase M24B family. Requires Mn(2+) as cofactor. Detected in gut, brain, testes and ovary.

Its subcellular location is the cytoplasm. It catalyses the reaction Release of any N-terminal amino acid, including proline, that is linked to proline, even from a dipeptide or tripeptide.. Its activity is regulated as follows. Inhibited by the chelating agent EDTA. Divalent metal ions have substrate- and concentration-dependent effects on activity. Activity towards bradykinin is inhibited with increasing Mn(2+) concentration. Activity towards substance P is stimulated by low Mn(2+) concentrations (in the range 10 uM-1 mM) but inhibited by Mn(2+) concentrations in excess of 1 mM. Ca(2+), Mg(2+) and Co(2+) stimulate activity towards substance P at concentrations of 10-100 uM but are inhibitory at concentrations of 1 mM. Zn(2+), Ni(2+) and Cu(2+) strongly inhibit activity towards substance P at concentrations of 1 mM. Functionally, catalyzes the removal of a penultimate prolyl residue from the N-termini of peptides, such as Arg-Pro-Pro. The polypeptide is Xaa-Pro aminopeptidase ApepP (Drosophila melanogaster (Fruit fly)).